The chain runs to 422 residues: Zinc-regulated transporter 2 (422 aa).

Residues 1–27 (MVDLIARDDSVDTCQASNGYNGHAGLR) are Extracellular-facing. A helical membrane pass occupies residues 28 to 48 (ILAVFIILISSGLGVYFPILS). Over 49-60 (SRYSFIRLPNWC) the chain is Cytoplasmic. A helical membrane pass occupies residues 61–81 (FFIAKFFGSGVIVATAFVHLL). The Extracellular segment spans residues 82–99 (QPAAEALGDECLGGTFAE). Residues 100–120 (YPWAFGICLMSLFLLFFTEII) traverse the membrane as a helical segment. Topologically, residues 121–262 (THYFVAKTLG…EEDKEQYLNQ (142 aa)) are cytoplasmic. 4 positions are modified to phosphoserine: serine 148, serine 149, serine 162, and serine 170. Residue threonine 188 is modified to Phosphothreonine. A helical transmembrane segment spans residues 263 to 283 (ILAVFILEFGIIFHSVFVGLS). Over 284 to 290 (LSVAGEE) the chain is Extracellular. A helical membrane pass occupies residues 291 to 311 (FETLFIVLTFHQMFEGLGLGT). At 312 to 326 (RVAETNWPESKKYMP) the chain is on the cytoplasmic side. A helical membrane pass occupies residues 327 to 347 (WLMGLAFTLTSPIAVAVGIGV). The Extracellular segment spans residues 348-358 (RHSWIPGSRRA). A helical membrane pass occupies residues 359–379 (LIANGVFDSISSGILIYTGLV). The Cytoplasmic portion of the chain corresponds to 380 to 400 (ELMAHEFLYSNQFKGPDGLKK). A helical membrane pass occupies residues 401–421 (MLSAYLIMCCGAALMALLGKW). A topological domain (extracellular) is located at residue alanine 422.

Belongs to the ZIP transporter (TC 2.A.5) family.

It localises to the membrane. Functionally, low-affinity zinc transport protein. Active in zinc-replete cells and is time-, temperature- and concentration-dependent and prefers zinc over other metals as its substrate. In Saccharomyces cerevisiae (strain ATCC 204508 / S288c) (Baker's yeast), this protein is Zinc-regulated transporter 2 (ZRT2).